A 333-amino-acid polypeptide reads, in one-letter code: Glycerol-3-phosphate dehydrogenase [NAD(P)+] (333 aa).

Positions 10, 11, 31, 32, and 105 each coordinate NADPH. Lys-105, Gly-136, and Ser-138 together coordinate sn-glycerol 3-phosphate. Ala-140 contributes to the NADPH binding site. Sn-glycerol 3-phosphate-binding residues include Lys-191, Asp-244, Ser-254, Arg-255, and Asn-256. The active-site Proton acceptor is Lys-191. Arg-255 serves as a coordination point for NADPH. NADPH contacts are provided by Val-279 and Glu-281.

This sequence belongs to the NAD-dependent glycerol-3-phosphate dehydrogenase family.

The protein localises to the cytoplasm. The enzyme catalyses sn-glycerol 3-phosphate + NAD(+) = dihydroxyacetone phosphate + NADH + H(+). It carries out the reaction sn-glycerol 3-phosphate + NADP(+) = dihydroxyacetone phosphate + NADPH + H(+). It participates in membrane lipid metabolism; glycerophospholipid metabolism. Catalyzes the reduction of the glycolytic intermediate dihydroxyacetone phosphate (DHAP) to sn-glycerol 3-phosphate (G3P), the key precursor for phospholipid synthesis. The sequence is that of Glycerol-3-phosphate dehydrogenase [NAD(P)+] from Chlorobium phaeobacteroides (strain DSM 266 / SMG 266 / 2430).